The chain runs to 132 residues: Small ribosomal subunit protein uS8c (132 aa).

Belongs to the universal ribosomal protein uS8 family. As to quaternary structure, part of the 30S ribosomal subunit.

Its subcellular location is the plastid. It localises to the chloroplast. Functionally, one of the primary rRNA binding proteins, it binds directly to 16S rRNA central domain where it helps coordinate assembly of the platform of the 30S subunit. The protein is Small ribosomal subunit protein uS8c (rps8) of Guillardia theta (Cryptophyte).